The chain runs to 64 residues: Beta-defensin 1 (64 aa).

The first 20 residues, 1 to 20 (MRLHRLLLVFLLMVLLPVPG), serve as a signal peptide directing secretion. Positions 21–23 (LLK) are excised as a propeptide. Intrachain disulfides connect cysteine 31–cysteine 60, cysteine 38–cysteine 53, and cysteine 43–cysteine 61.

It belongs to the beta-defensin family. As to quaternary structure, monomer. Homodimer.

Its subcellular location is the secreted. It is found in the membrane. Its function is as follows. Has bactericidal activity. May act as a ligand for C-C chemokine receptor CCR6. Positively regulates the sperm motility and bactericidal activity in a CCR6-dependent manner. Binds to CCR6 and triggers Ca2+ mobilization in the sperm which is important for its motility. This chain is Beta-defensin 1 (DEFB1), found in Sus scrofa (Pig).